A 158-amino-acid chain; its full sequence is uncharacterized protein (158 aa).

This is an uncharacterized protein from Ureaplasma parvum serovar 3 (strain ATCC 700970).